The following is a 248-amino-acid chain: UPF0524 protein C3orf70 homolog (248 aa).

A disordered region spans residues 169–248 (KESDTPKLGH…EVIETMETTV (80 aa)). Over residues 200–227 (SCDEDTEEGAELSSEEDYSPESSWEPDE) the composition is skewed to acidic residues.

This sequence belongs to the UPF0524 family.

Functionally, may play a role in neuronal and neurobehavioral development. The chain is UPF0524 protein C3orf70 homolog from Mus musculus (Mouse).